The following is a 202-amino-acid chain: Large ribosomal subunit protein bL25 (202 aa).

A disordered region spans residues 182-202 (EVEAEETEDDEAASEGEEAAE). Positions 183–202 (VEAEETEDDEAASEGEEAAE) are enriched in acidic residues.

This sequence belongs to the bacterial ribosomal protein bL25 family. CTC subfamily. Part of the 50S ribosomal subunit; part of the 5S rRNA/L5/L18/L25 subcomplex. Contacts the 5S rRNA. Binds to the 5S rRNA independently of L5 and L18.

Functionally, this is one of the proteins that binds to the 5S RNA in the ribosome where it forms part of the central protuberance. This is Large ribosomal subunit protein bL25 from Corynebacterium glutamicum (strain R).